Consider the following 33-residue polypeptide: Neutrophil defensin 4 (33 aa).

Intrachain disulfides connect Cys3–Cys31, Cys5–Cys20, and Cys10–Cys30.

This sequence belongs to the alpha-defensin family. Post-translationally, HANP-2 could be a product of proteolytic N-terminal amino acid removal from HANP-4.

It localises to the secreted. Functionally, bactericidal activity, greater against Gram-positive bacteria. Low anti-fungi activity. This chain is Neutrophil defensin 4, found in Mesocricetus auratus (Golden hamster).